Here is a 325-residue protein sequence, read N- to C-terminus: Palmitoyltransferase PFA3 (325 aa).

Residues 1-8 (MHICSLIP) are Cytoplasmic-facing. Residues 9 to 29 (ILFPKLLTCGLALYSAVVLWL) form a helical membrane-spanning segment. A topological domain (lumenal) is located at residue Lys-30. The helical transmembrane segment at 31-51 (VSVIGSFIQGTVLLTLVPLIL) threads the bilayer. The Cytoplasmic segment spans residues 52 to 147 (YAYFSTIAVG…PGCIGYNNHK (96 aa)). Residues 104 to 154 (RYCVKCKVWKPDRCHHCSACDKCYLRRDHHCVWFPGCIGYNNHKFFLHFLL) form the DHHC domain. A helical membrane pass occupies residues 148–168 (FFLHFLLYASVYAFWICIITT). Topologically, residues 169-188 (WDLVVWFRAHSYERELLNVH) are lumenal. A helical membrane pass occupies residues 189–209 (LVCLWALSAAATVALTAFCAF). The Cytoplasmic portion of the chain corresponds to 210–325 (NIYLVCKNET…TRFNSKRAVQ (116 aa)).

It belongs to the DHHC palmitoyltransferase family. PFA3 subfamily. Post-translationally, autopalmitoylated.

The protein localises to the vacuole membrane. The catalysed reaction is L-cysteinyl-[protein] + hexadecanoyl-CoA = S-hexadecanoyl-L-cysteinyl-[protein] + CoA. Palmitoyltransferase specific for VAC8. Palmitoylates VAC8 at one or more of its N-terminal cysteine residues, which is required for its proper membrane localization. The sequence is that of Palmitoyltransferase PFA3 (PFA3) from Eremothecium gossypii (strain ATCC 10895 / CBS 109.51 / FGSC 9923 / NRRL Y-1056) (Yeast).